Here is a 194-residue protein sequence, read N- to C-terminus: dITP/XTP pyrophosphatase (194 aa).

8–13 is a substrate binding site; the sequence is TNNPHK. The Proton acceptor role is filled by Asp69. Position 69 (Asp69) interacts with Mg(2+). Residues Thr70, 150-153, Lys173, and 178-179 contribute to the substrate site; these read FGYD and HR.

This sequence belongs to the HAM1 NTPase family. In terms of assembly, homodimer. It depends on Mg(2+) as a cofactor.

It carries out the reaction XTP + H2O = XMP + diphosphate + H(+). The enzyme catalyses dITP + H2O = dIMP + diphosphate + H(+). The catalysed reaction is ITP + H2O = IMP + diphosphate + H(+). Its function is as follows. Pyrophosphatase that catalyzes the hydrolysis of nucleoside triphosphates to their monophosphate derivatives, with a high preference for the non-canonical purine nucleotides XTP (xanthosine triphosphate), dITP (deoxyinosine triphosphate) and ITP. Seems to function as a house-cleaning enzyme that removes non-canonical purine nucleotides from the nucleotide pool, thus preventing their incorporation into DNA/RNA and avoiding chromosomal lesions. The chain is dITP/XTP pyrophosphatase from Porphyromonas gingivalis (strain ATCC BAA-308 / W83).